Consider the following 503-residue polypeptide: Protein-cysteine N-palmitoyltransferase HHAT-like protein (503 aa).

8 consecutive transmembrane segments (helical) span residues 12 to 31 (LGLY…RGLL), 65 to 87 (WVMW…VLFA), 100 to 122 (WMYA…LLLL), 127 to 149 (MVLY…LASL), 250 to 272 (AGLS…ILTI), 287 to 309 (LAGL…FGVV), 426 to 445 (VRAL…NLVS), and 460 to 482 (ILTG…VQLV).

It belongs to the membrane-bound acyltransferase family. HHAT subfamily. In terms of assembly, interacts with SHH.

The protein localises to the endoplasmic reticulum membrane. Functionally, negatively regulates N-terminal palmitoylation of SHH by HHAT/SKN. The protein is Protein-cysteine N-palmitoyltransferase HHAT-like protein (Hhatl) of Mus musculus (Mouse).